Here is a 77-residue protein sequence, read N- to C-terminus: MEKLTILLLVAAVLMSTQALPQGGGENRLKENIKFLLKRKTAADRGMWGDCDDWLAACTTPSQCCTEVCDGFCRLWE.

The signal sequence occupies residues 1 to 19 (MEKLTILLLVAAVLMSTQA). The propeptide occupies 20–45 (LPQGGGENRLKENIKFLLKRKTAADR). Disulfide bonds link cysteine 51/cysteine 65, cysteine 58/cysteine 69, and cysteine 64/cysteine 73.

The protein belongs to the conotoxin O2 superfamily. Expressed by the venom duct.

It is found in the secreted. The chain is Conotoxin PnMEKL-04 from Conus pennaceus (Feathered cone).